Here is a 642-residue protein sequence, read N- to C-terminus: Threonine--tRNA ligase (642 aa).

Residues 1–61 enclose the TGS domain; the sequence is MPVIRFYDGS…REDAFIEFVD (61 aa). The tract at residues 243–534 is catalytic; that stretch reads DHRKIGKFLQ…LIEECSGNLP (292 aa). Zn(2+) contacts are provided by Cys-334, His-385, and His-511.

It belongs to the class-II aminoacyl-tRNA synthetase family. Homodimer. Zn(2+) is required as a cofactor.

It localises to the cytoplasm. It catalyses the reaction tRNA(Thr) + L-threonine + ATP = L-threonyl-tRNA(Thr) + AMP + diphosphate + H(+). Catalyzes the attachment of threonine to tRNA(Thr) in a two-step reaction: L-threonine is first activated by ATP to form Thr-AMP and then transferred to the acceptor end of tRNA(Thr). Also edits incorrectly charged L-seryl-tRNA(Thr). This is Threonine--tRNA ligase from Buchnera aphidicola subsp. Acyrthosiphon pisum (strain APS) (Acyrthosiphon pisum symbiotic bacterium).